We begin with the raw amino-acid sequence, 377 residues long: D-alanine--D-alanine ligase (377 aa).

The ATP-grasp domain occupies 140–349 (KELLTVNNIR…NVELVDKLID (210 aa)). 170-225 (VKDLGDVVFVKAANQGSSVGVSRAKTADEFEAALTDSFQYDYKVLIEAAVKGPREL) serves as a coordination point for ATP. Residues D303, E316, and N318 each coordinate Mg(2+).

This sequence belongs to the D-alanine--D-alanine ligase family. The cofactor is Mg(2+). It depends on Mn(2+) as a cofactor.

The protein localises to the cytoplasm. The enzyme catalyses 2 D-alanine + ATP = D-alanyl-D-alanine + ADP + phosphate + H(+). It participates in cell wall biogenesis; peptidoglycan biosynthesis. Its function is as follows. Cell wall formation. The sequence is that of D-alanine--D-alanine ligase from Leuconostoc citreum (strain KM20).